Reading from the N-terminus, the 1213-residue chain is Chitin synthase 3 (1213 aa).

The tract at residues 1 to 97 (MSNFRDSSSP…TPPHQEEEED (97 aa)) is disordered. At 1 to 168 (MSNFRDSSSP…KPKHDIYFWK (168 aa)) the chain is on the cytoplasmic side. Residues 32–44 (IRPERSRMDESHP) show a composition bias toward basic and acidic residues. The segment covering 75 to 87 (ELSTSRSHLSNYA) has biased composition (polar residues). Residues 169–189 (VYCYAITFWAPAPLLKLFGLP) form a helical membrane-spanning segment. Residues 190 to 200 (TKDRQFAWREK) lie on the Extracellular side of the membrane. The helical transmembrane segment at 201 to 221 (IGLISCILYVGAFVAYLTFGF) threads the bilayer. Topologically, residues 222–450 (TKTVCSSQVV…TDTIGCIASK (229 aa)) are cytoplasmic. A helical transmembrane segment spans residues 451–471 (VVLYMSLVFILSVVVVKFIMA). Topologically, residues 472 to 1016 (CWFKWVTSRK…INSTVHNLFE (545 aa)) are extracellular. 2 N-linked (GlcNAc...) asparagine glycosylation sites follow: Asn-588 and Asn-1008. A helical membrane pass occupies residues 1017 to 1037 (LVLVKDLCGTFCFSMQFVIFI). Over 1038-1039 (EL) the chain is Cytoplasmic. Residues 1040–1060 (IGTLVLPAAITFTIYVIIVAI) form a helical membrane-spanning segment. Residues 1061–1065 (VSKPT) lie on the Extracellular side of the membrane. The chain crosses the membrane as a helical span at residues 1066-1086 (PVMSLVLLAVIFGLPGCLIVI). Residues 1087 to 1213 (TVSSLSYLVY…LSQGSSSGSS (127 aa)) are Cytoplasmic-facing. Residues 1161-1213 (ERRSTENRKQQQQQQLTNNSSNNLAVPGAAWDPSNTGGNLIDDLSQGSSSGSS) form a disordered region.

The protein belongs to the chitin synthase family. Class IV subfamily.

It localises to the cell membrane. It catalyses the reaction [(1-&gt;4)-N-acetyl-beta-D-glucosaminyl](n) + UDP-N-acetyl-alpha-D-glucosamine = [(1-&gt;4)-N-acetyl-beta-D-glucosaminyl](n+1) + UDP + H(+). Its function is as follows. Polymerizes chitin, a structural polymer of the cell wall and septum, by transferring the sugar moiety of UDP-GlcNAc to the non-reducing end of the growing chitin polymer. In Candida albicans (Yeast), this protein is Chitin synthase 3 (CHS3).